The sequence spans 966 residues: Protein mes-1 (966 aa).

Residues 1–19 form the signal peptide; sequence MKIHHFLTLLCTFLPLTTT. Over 20–470 the chain is Extracellular; sequence ALTNSTPLSL…QASDIPTSVE (451 aa). Asn-62, Asn-126, Asn-183, Asn-214, Asn-251, and Asn-372 each carry an N-linked (GlcNAc...) asparagine glycan. Residues 471–491 traverse the membrane as a helical segment; that stretch reads LMAVVLATSAIFALIALFLLY. Residues 492-966 lie on the Cytoplasmic side of the membrane; sequence RKRKRDKKAR…FKSVNVAATV (475 aa). The 311-residue stretch at 656-966 folds into the Protein kinase domain; that stretch reads HNFNERIEKQ…FKSVNVAATV (311 aa). ATP is bound by residues 662 to 670 and Lys-685; that span reads IEKQAYWLM.

Belongs to the protein kinase superfamily.

The protein localises to the cell membrane. In terms of biological role, during early embryogenesis, controls asymmetric cell division and the asymmetric localization of P granules of germline precursor P2 and its descendant P3. Probably upstream of tyrosine kinase src-1, plays a role in endoderm development by controlling spindle orientation during EMS blastomere cell division. Controls EMS spindle orientation probably by promoting lin-5 and gpr-1/2 enrichment at, and let-99 exclusion from the junction between P2 and EMS cells. This chain is Protein mes-1, found in Caenorhabditis elegans.